Consider the following 314-residue polypeptide: Homoserine O-acetyltransferase (314 aa).

Catalysis depends on Cys142, which acts as the Acyl-thioester intermediate. Substrate is bound by residues Lys163 and Ser192. The active-site Proton acceptor is His235. Residue Glu237 is part of the active site. A substrate-binding site is contributed by Arg249.

It belongs to the MetA family.

Its subcellular location is the cytoplasm. It carries out the reaction L-homoserine + acetyl-CoA = O-acetyl-L-homoserine + CoA. It functions in the pathway amino-acid biosynthesis; L-methionine biosynthesis via de novo pathway; O-acetyl-L-homoserine from L-homoserine: step 1/1. In terms of biological role, transfers an acetyl group from acetyl-CoA to L-homoserine, forming acetyl-L-homoserine. The chain is Homoserine O-acetyltransferase from Streptococcus pneumoniae (strain JJA).